Here is a 596-residue protein sequence, read N- to C-terminus: Sphingomyelinase C 1 (596 aa).

The signal sequence occupies residues 1–36 (MITKRNIPCKKNWKYKKKSISLTLITICYMFLFLTS). The interval 63–118 (KIEDSTNTDPSSNVNEEDENSINANANDNAPSDSDSSNPRSPDKNPVNPTSPNSSS) is disordered. Positions 67 to 76 (STNTDPSSNV) are enriched in polar residues. The segment covering 83–118 (SINANANDNAPSDSDSSNPRSPDKNPVNPTSPNSSS) has biased composition (low complexity).

It is found in the secreted. It carries out the reaction a sphingomyelin + H2O = phosphocholine + an N-acylsphing-4-enine + H(+). The sequence is that of Sphingomyelinase C 1 (sph1) from Leptospira interrogans serogroup Icterohaemorrhagiae serovar copenhageni (strain Fiocruz L1-130).